The primary structure comprises 350 residues: S-adenosylmethionine:tRNA ribosyltransferase-isomerase (350 aa).

The protein belongs to the QueA family. Monomer.

Its subcellular location is the cytoplasm. It carries out the reaction 7-aminomethyl-7-carbaguanosine(34) in tRNA + S-adenosyl-L-methionine = epoxyqueuosine(34) in tRNA + adenine + L-methionine + 2 H(+). The protein operates within tRNA modification; tRNA-queuosine biosynthesis. Functionally, transfers and isomerizes the ribose moiety from AdoMet to the 7-aminomethyl group of 7-deazaguanine (preQ1-tRNA) to give epoxyqueuosine (oQ-tRNA). The protein is S-adenosylmethionine:tRNA ribosyltransferase-isomerase of Aliivibrio salmonicida (strain LFI1238) (Vibrio salmonicida (strain LFI1238)).